The sequence spans 182 residues: Ribosome maturation factor RimM (182 aa).

A PRC barrel domain is found at 103–182 (EDEFYWRELF…RIEVDWDPGF (80 aa)).

The protein belongs to the RimM family. As to quaternary structure, binds ribosomal protein uS19.

Its subcellular location is the cytoplasm. Its function is as follows. An accessory protein needed during the final step in the assembly of 30S ribosomal subunit, possibly for assembly of the head region. Essential for efficient processing of 16S rRNA. May be needed both before and after RbfA during the maturation of 16S rRNA. It has affinity for free ribosomal 30S subunits but not for 70S ribosomes. In Vibrio campbellii (strain ATCC BAA-1116), this protein is Ribosome maturation factor RimM.